The primary structure comprises 43 residues: Cytin chain A (43 aa).

The protein belongs to the protease inhibitor I13 (potato type I serine protease inhibitor) family. As to quaternary structure, heterodimer of an A chain and a B chain, linked by a disulfide bond.

Its function is as follows. Inhibitor of chymotrypsin. This Theromyzon tessulatum (Duck leech) protein is Cytin chain A.